The primary structure comprises 225 residues: Protein GrpE (225 aa).

Over residues 1–15 the composition is skewed to polar residues; the sequence is MSGDASTPEQDQNVV. Disordered regions lie at residues 1-48 and 198-225; these read MSGD…DRMQ and VSMG…AEEA. Over residues 201 to 225 the composition is skewed to low complexity; that stretch reads GPGPSDPGSAPAEAAAAPDQTAEEA.

The protein belongs to the GrpE family. In terms of assembly, homodimer.

Its subcellular location is the cytoplasm. Functionally, participates actively in the response to hyperosmotic and heat shock by preventing the aggregation of stress-denatured proteins, in association with DnaK and GrpE. It is the nucleotide exchange factor for DnaK and may function as a thermosensor. Unfolded proteins bind initially to DnaJ; upon interaction with the DnaJ-bound protein, DnaK hydrolyzes its bound ATP, resulting in the formation of a stable complex. GrpE releases ADP from DnaK; ATP binding to DnaK triggers the release of the substrate protein, thus completing the reaction cycle. Several rounds of ATP-dependent interactions between DnaJ, DnaK and GrpE are required for fully efficient folding. The polypeptide is Protein GrpE (Synechococcus sp. (strain CC9605)).